A 331-amino-acid chain; its full sequence is Ketol-acid reductoisomerase (NADP(+)) (331 aa).

In terms of domain architecture, KARI N-terminal Rossmann spans 1 to 181 (MKVYYEKDAN…GGSRSGVIET (181 aa)). Residues 24 to 27 (YGSQ), Arg47, and 82 to 85 (DQVQ) each bind NADP(+). His107 is a catalytic residue. NADP(+) is bound at residue Gly133. Residues 182-327 (TFREETETDL…GELRGMMPWL (146 aa)) enclose the KARI C-terminal knotted domain. Residues Asp190, Glu194, Glu226, and Glu230 each contribute to the Mg(2+) site. Ser251 lines the substrate pocket.

Belongs to the ketol-acid reductoisomerase family. Requires Mg(2+) as cofactor.

The enzyme catalyses (2R)-2,3-dihydroxy-3-methylbutanoate + NADP(+) = (2S)-2-acetolactate + NADPH + H(+). It carries out the reaction (2R,3R)-2,3-dihydroxy-3-methylpentanoate + NADP(+) = (S)-2-ethyl-2-hydroxy-3-oxobutanoate + NADPH + H(+). It functions in the pathway amino-acid biosynthesis; L-isoleucine biosynthesis; L-isoleucine from 2-oxobutanoate: step 2/4. It participates in amino-acid biosynthesis; L-valine biosynthesis; L-valine from pyruvate: step 2/4. Its function is as follows. Involved in the biosynthesis of branched-chain amino acids (BCAA). Catalyzes an alkyl-migration followed by a ketol-acid reduction of (S)-2-acetolactate (S2AL) to yield (R)-2,3-dihydroxy-isovalerate. In the isomerase reaction, S2AL is rearranged via a Mg-dependent methyl migration to produce 3-hydroxy-3-methyl-2-ketobutyrate (HMKB). In the reductase reaction, this 2-ketoacid undergoes a metal-dependent reduction by NADPH to yield (R)-2,3-dihydroxy-isovalerate. This chain is Ketol-acid reductoisomerase (NADP(+)), found in Nitratidesulfovibrio vulgaris (strain ATCC 29579 / DSM 644 / CCUG 34227 / NCIMB 8303 / VKM B-1760 / Hildenborough) (Desulfovibrio vulgaris).